Consider the following 190-residue polypeptide: 7-methyl-GTP pyrophosphatase (190 aa).

The Proton acceptor role is filled by Asp69.

The protein belongs to the Maf family. YceF subfamily. The cofactor is a divalent metal cation.

Its subcellular location is the cytoplasm. It catalyses the reaction N(7)-methyl-GTP + H2O = N(7)-methyl-GMP + diphosphate + H(+). Its function is as follows. Nucleoside triphosphate pyrophosphatase that hydrolyzes 7-methyl-GTP (m(7)GTP). May have a dual role in cell division arrest and in preventing the incorporation of modified nucleotides into cellular nucleic acids. The chain is 7-methyl-GTP pyrophosphatase from Xanthomonas axonopodis pv. citri (strain 306).